Here is a 129-residue protein sequence, read N- to C-terminus: Small ribosomal subunit protein uS11 (129 aa).

Belongs to the universal ribosomal protein uS11 family. Part of the 30S ribosomal subunit. Interacts with proteins S7 and S18. Binds to IF-3.

Located on the platform of the 30S subunit, it bridges several disparate RNA helices of the 16S rRNA. Forms part of the Shine-Dalgarno cleft in the 70S ribosome. The sequence is that of Small ribosomal subunit protein uS11 from Pseudomonas fluorescens (strain ATCC BAA-477 / NRRL B-23932 / Pf-5).